Here is a 367-residue protein sequence, read N- to C-terminus: tRNA-specific 2-thiouridylase MnmA (367 aa).

ATP is bound by residues 12–19 and methionine 38; that span reads GMSGGVDS. An interaction with target base in tRNA region spans residues 98 to 100; it reads NPD. The active-site Nucleophile is the cysteine 103. Cysteine 103 and cysteine 200 form a disulfide bridge. Glycine 128 provides a ligand contact to ATP. The interaction with tRNA stretch occupies residues 150–152; the sequence is KDQ. Residue cysteine 200 is the Cysteine persulfide intermediate of the active site. Positions 312–313 are interaction with tRNA; the sequence is RY.

This sequence belongs to the MnmA/TRMU family.

Its subcellular location is the cytoplasm. The enzyme catalyses S-sulfanyl-L-cysteinyl-[protein] + uridine(34) in tRNA + AH2 + ATP = 2-thiouridine(34) in tRNA + L-cysteinyl-[protein] + A + AMP + diphosphate + H(+). Catalyzes the 2-thiolation of uridine at the wobble position (U34) of tRNA, leading to the formation of s(2)U34. The protein is tRNA-specific 2-thiouridylase MnmA of Psychromonas ingrahamii (strain DSM 17664 / CCUG 51855 / 37).